Consider the following 507-residue polypeptide: Arylsulfatase A (507 aa).

Residues 1-18 form the signal peptide; the sequence is MEALWTLTLALAAGLAAA. Residues aspartate 29, aspartate 30, and cysteine 69 each coordinate Ca(2+). The Nucleophile role is filled by cysteine 69. Cysteine 69 is subject to 3-oxoalanine (Cys). Substrate is bound at residue lysine 123. Histidine 125 is an active-site residue. Serine 150 contributes to the substrate binding site. 2 disulfides stabilise this stretch: cysteine 156–cysteine 172 and cysteine 161–cysteine 168. Asparagine 158 carries N-linked (GlcNAc...) asparagine glycosylation. The N-linked (GlcNAc...) asparagine glycan is linked to asparagine 184. Substrate is bound at residue histidine 229. Ca(2+) contacts are provided by aspartate 281 and asparagine 282. Cystine bridges form between cysteine 300-cysteine 414, cysteine 488-cysteine 500, cysteine 489-cysteine 502, and cysteine 493-cysteine 499. Residue lysine 302 participates in substrate binding. Residue asparagine 350 is glycosylated (N-linked (GlcNAc...) asparagine).

Belongs to the sulfatase family. In terms of assembly, homodimer at neutral pH and homooctamer at acidic pH. Exists both as a single chain of 58 kDa (component A) or as a chain of 50 kDa (component B) linked by disulfide bond(s) to a 7 kDa chain (component C). Interacts with SUMF1. It depends on Ca(2+) as a cofactor. Post-translationally, the conversion to 3-oxoalanine (also known as C-formylglycine, FGly), of a serine or cysteine residue in prokaryotes and of a cysteine residue in eukaryotes, is critical for catalytic activity. This post-translational modification is severely defective in multiple sulfatase deficiency (MSD).

It is found in the endoplasmic reticulum. It localises to the lysosome. The catalysed reaction is an N-acyl-1-beta-D-(3-O-sulfo)-galactosyl-sphing-4-enine + H2O = a beta-D-galactosyl-(1&lt;-&gt;1')-N-acylsphing-4-enine + sulfate + H(+). In terms of biological role, hydrolyzes cerebroside sulfate. This Bos taurus (Bovine) protein is Arylsulfatase A (ARSA).